We begin with the raw amino-acid sequence, 786 residues long: Endonuclease MutS2 (786 aa).

332–339 (GPNTGGKT) serves as a coordination point for ATP. One can recognise a Smr domain in the interval 711-786 (IDLRGMDSME…GTGVTVVELK (76 aa)).

This sequence belongs to the DNA mismatch repair MutS family. MutS2 subfamily. In terms of assembly, homodimer. Binds to stalled ribosomes, contacting rRNA.

In terms of biological role, endonuclease that is involved in the suppression of homologous recombination and thus may have a key role in the control of bacterial genetic diversity. Functionally, acts as a ribosome collision sensor, splitting the ribosome into its 2 subunits. Detects stalled/collided 70S ribosomes which it binds and splits by an ATP-hydrolysis driven conformational change. Acts upstream of the ribosome quality control system (RQC), a ribosome-associated complex that mediates the extraction of incompletely synthesized nascent chains from stalled ribosomes and their subsequent degradation. Probably generates substrates for RQC. The polypeptide is Endonuclease MutS2 (Clostridium tetani (strain Massachusetts / E88)).